An 84-amino-acid chain; its full sequence is Large ribosomal subunit protein bL27 (84 aa).

Residues 1–21 form a disordered region; that stretch reads MAHKKGASSTRNGRDSNAQRL. The span at 7 to 19 shows a compositional bias: polar residues; it reads ASSTRNGRDSNAQ.

Belongs to the bacterial ribosomal protein bL27 family.

The protein is Large ribosomal subunit protein bL27 of Clavibacter michiganensis subsp. michiganensis (strain NCPPB 382).